Reading from the N-terminus, the 574-residue chain is Interactor of HORMAD1 protein 1 (574 aa).

The disordered stretch occupies residues 113 to 133 (GLSKQFEEKKRRATDQSDSET). Residues 117–127 (QFEEKKRRATD) are compositionally biased toward basic and acidic residues. The stretch at 217-240 (MEMKSTLKNLEVLVVEQTKNLQQF) forms a coiled coil. 3 disordered regions span residues 267–324 (GHLK…GVWD), 372–393 (FSNLPSQRAGNGQGLMAQGASQ), and 426–457 (TEQKGRPCRKRRRGKKQQPQRSKRGGLLDRKQ). The segment covering 272 to 284 (STSQTSPSLTQSL) has biased composition (low complexity). The segment covering 372 to 381 (FSNLPSQRAG) has biased composition (polar residues). Positions 431 to 449 (RPCRKRRRGKKQQPQRSKR) are enriched in basic residues. Phosphoserine occurs at positions 476, 569, and 570.

In terms of assembly, part of the MCD recombinosome complex, at least composed of IHO1, REC114 and MEI4. Interacts with REC114. Interacts with MEI4. Interacts with HORMAD1. Interacts with ANKRD31. In terms of tissue distribution, detected in spermatocytes and testis (at protein level).

Its subcellular location is the chromosome. Functionally, required for DNA double-strand breaks (DSBs) formation in unsynapsed regions during meiotic recombination. Probably acts by forming a complex with MEI4 and REC114, which activates DSBs formation in unsynapsed regions, an essential step to ensure completion of synapsis. Not required for HORMAD1 functions in pairing-independent synaptonemal complex formation, ATR recruitment to unsynapsed axes, meiotic silencing of unsynapsed chromatin (MSUC) or meiotic surveillance. The sequence is that of Interactor of HORMAD1 protein 1 from Mus musculus (Mouse).